The chain runs to 90 residues: Sec-independent protein translocase protein TatAo (90 aa).

The helical transmembrane segment at 8-28 (FPGLPGGPELLIVLLIVVLLF) threads the bilayer. The tract at residues 39-90 (SSGQAMGEFRRGREEIEEELKKGAEGGDDEGENGDEAEADDADATETEAESR) is disordered. Basic and acidic residues predominate over residues 46–63 (EFRRGREEIEEELKKGAE). The span at 64–90 (GGDDEGENGDEAEADDADATETEAESR) shows a compositional bias: acidic residues.

The protein belongs to the TatA/E family. As to quaternary structure, forms a complex with TatC. Cytoplasmic and membrane-bound TatA form high-molecular-weight complexes.

The protein localises to the cell membrane. The protein resides in the cytoplasm. Functionally, part of the twin-arginine translocation (Tat) system that transports large folded proteins containing a characteristic twin-arginine motif in their signal peptide across membranes. TatA could form the protein-conducting channel of the Tat system. This chain is Sec-independent protein translocase protein TatAo, found in Haloferax volcanii (strain ATCC 29605 / DSM 3757 / JCM 8879 / NBRC 14742 / NCIMB 2012 / VKM B-1768 / DS2) (Halobacterium volcanii).